A 71-amino-acid chain; its full sequence is Non-disulfide-bridged peptide 5.5 (71 aa).

The signal sequence occupies residues 1 to 23 (MKTQFIVLIVAIVFLQLLSQSEA). At L36 the chain carries Leucine amide. Positions 40–71 (DLRHLDLDQFDDMFDQPEISAADMKFLQDLLR) are excised as a propeptide.

Belongs to the non-disulfide-bridged peptide (NDBP) superfamily. Short antimicrobial peptide (group 4) family. As to expression, expressed by the venom gland.

The protein resides in the secreted. Its subcellular location is the target cell membrane. Antimicrobial peptide. Is active on Mycobacterium abscessus subsp. massiliense (MBC=200 uM), a rapidly growing and emerging pathogen associated with healthcare infections. Also shows antifungal activities. Has a weak hemolytic activity on human erythrocytes (10% at 610 uM), indicating a low toxicity (therapeutic index (TI)=3.05). In addition, treatment of infected macrophages reduces the bacterial load. In vivo, treatment of M.abscessus-infected mice causes a decrease in the bacterial load in the lungs and liver. The sequence is that of Non-disulfide-bridged peptide 5.5 from Hoffmannihadrurus gertschi (Scorpion).